A 37-amino-acid chain; its full sequence is MKVRASVKKICDKCKVIRRHGVVRVICENAKHKQRQG.

Belongs to the bacterial ribosomal protein bL36 family.

The polypeptide is Large ribosomal subunit protein bL36 (Koribacter versatilis (strain Ellin345)).